Reading from the N-terminus, the 232-residue chain is Charged multivesicular body protein 4c (232 aa).

Disordered regions lie at residues 1–23 (MSKL…PSAQ) and 172–232 (EQEE…AWAT). An intramolecular interaction with C-terminus region spans residues 1 to 153 (MSKLGKFFKG…EISEAFSQRV (153 aa)). Over residues 11–23 (SRSSRARAAPSAQ) the composition is skewed to low complexity. Coiled coils occupy residues 21-50 (SAQE…IQRE) and 125-182 (LNKI…KMTS). The tract at residues 154–232 (QFADGFDEDE…DFKQLAAWAT (79 aa)) is intramolecular interaction with N-terminus. Position 210 is a phosphoserine; by AURKB (Ser-210).

Belongs to the SNF7 family. In terms of assembly, probable core component of the endosomal sorting required for transport complex III (ESCRT-III). ESCRT-III components are thought to multimerize to form a flat lattice on the perimeter membrane of the endosome. Several assembly forms of ESCRT-III may exist that interact and act sequentially. Self-associates. Interacts with CHMP2A. Interacts with CHMP4A. Interacts with CHMP4B. Interacts with CHMP6. Interacts with VPS4A. Interacts with PDCD6IP; the interaction is direct. Phosphorylated at Ser-210 by AURKB during cytokinesis: together with ZFYVE19/ANCHR, phosphorylated CHMP4C retains abscission-competent VPS4 (VPS4A and/or VPS4B) at the midbody ring until abscission checkpoint signaling is terminated at late cytokinesis.

It localises to the cytoplasm. The protein resides in the cytosol. The protein localises to the late endosome membrane. It is found in the midbody. Its subcellular location is the midbody ring. Functionally, probable core component of the endosomal sorting required for transport complex III (ESCRT-III) which is involved in multivesicular bodies (MVBs) formation and sorting of endosomal cargo proteins into MVBs. MVBs contain intraluminal vesicles (ILVs) that are generated by invagination and scission from the limiting membrane of the endosome and mostly are delivered to lysosomes enabling degradation of membrane proteins, such as stimulated growth factor receptors, lysosomal enzymes and lipids. The MVB pathway appears to require the sequential function of ESCRT-O, -I,-II and -III complexes. ESCRT-III proteins mostly dissociate from the invaginating membrane before the ILV is released. The ESCRT machinery also functions in topologically equivalent membrane fission events, such as the terminal stages of cytokinesis. Key component of the cytokinesis checkpoint, a process required to delay abscission to prevent both premature resolution of intercellular chromosome bridges and accumulation of DNA damage: upon phosphorylation by AURKB, together with ZFYVE19/ANCHR, retains abscission-competent VPS4 (VPS4A and/or VPS4B) at the midbody ring until abscission checkpoint signaling is terminated at late cytokinesis. Deactivation of AURKB results in dephosphorylation of CHMP4C followed by its dissociation from ANCHR and VPS4 and subsequent abscission. ESCRT-III proteins are believed to mediate the necessary vesicle extrusion and/or membrane fission activities, possibly in conjunction with the AAA ATPase VPS4. CHMP4A/B/C are required for the exosomal release of SDCBP, CD63 and syndecan. The protein is Charged multivesicular body protein 4c (Chmp4c) of Rattus norvegicus (Rat).